A 493-amino-acid polypeptide reads, in one-letter code: UDP-N-acetylmuramoyl-L-alanyl-D-glutamate--L-lysine ligase (493 aa).

S30 provides a ligand contact to UDP-N-acetyl-alpha-D-muramoyl-L-alanyl-D-glutamate. ATP is bound at residue 110–116; that stretch reads GTNGKTS. Residues N151, 152-153, S179, and R187 each bind UDP-N-acetyl-alpha-D-muramoyl-L-alanyl-D-glutamate; that span reads TT. An N6-carboxylysine modification is found at K219. An L-lysine recognition motif motif is present at residues 406–409; the sequence is DNPA.

Belongs to the MurCDEF family. MurE subfamily. Mg(2+) serves as cofactor. In terms of processing, carboxylation is probably crucial for Mg(2+) binding and, consequently, for the gamma-phosphate positioning of ATP.

It is found in the cytoplasm. It catalyses the reaction UDP-N-acetyl-alpha-D-muramoyl-L-alanyl-D-glutamate + L-lysine + ATP = UDP-N-acetyl-alpha-D-muramoyl-L-alanyl-gamma-D-glutamyl-L-lysine + ADP + phosphate + H(+). Its pathway is cell wall biogenesis; peptidoglycan biosynthesis. In terms of biological role, catalyzes the addition of L-lysine to the nucleotide precursor UDP-N-acetylmuramoyl-L-alanyl-D-glutamate (UMAG) in the biosynthesis of bacterial cell-wall peptidoglycan. Cannot use diaminopimelate as substrate. Can accept L-ornithine as substrate, but the efficiency is 400-fold lower than that with L-lysine. Seems to have a role in beta-lactam antibiotic resistance. This Staphylococcus aureus (strain NCTC 8325 / PS 47) protein is UDP-N-acetylmuramoyl-L-alanyl-D-glutamate--L-lysine ligase.